A 919-amino-acid chain; its full sequence is WD repeat-containing protein 47 (919 aa).

In terms of domain architecture, LisH spans 10-42 (KEVEIIKLILDFLNSKKLHISMLALEKESGVIN). The CTLH domain maps to 45-102 (FSDDMLFLRQLILDGQWDEVLQFIQPLECMEKFDKKRFRYIILKQKFLEALCVNNAMS). The residue at position 285 (threonine 285) is a Phosphothreonine. Phosphoserine is present on residues serine 289, serine 292, serine 297, and serine 312. The disordered stretch occupies residues 393–421 (GQSSVSEKEPANGAQNPGPAKQEKNELRD). Serine 422 carries the post-translational modification Phosphoserine. Residues 500–590 (LNQQCNGSKG…SLSRSKGEED (91 aa)) form a disordered region. Residues 517-551 (VTSFTTPPQDSSQRLTHDASNIHTSTPRNPGSTNH) show a composition bias toward polar residues. Threonine 542 carries the phosphothreonine modification. WD repeat units lie at residues 604–643 (EDTQAVRAVAFHPAGGLYAVGSNSKTLRVCAYPDVIDPSA), 659–698 (HHKGSIYCVAWSPCGQLLATGSNDKYVKVLPFNAETCNAT), 706–748 (MHDG…GQGL), 753–791 (GHTGHILALYTWSGWMIASGSQDKTVRFWDLRVPSCVRV), 798–837 (GTGSAVASVAVDPSGRLLATGQEDSSCMLYDIRGGRMVQS), 840–879 (PHSSDVRSVRFSPGAHYLLTGSYDMKIKVTDLQGDLTKQL), and 886–918 (EHKDKVIQCRWHTQDLSFLSSSADRTVTLWTYN).

Interacts with MAP1S (via WD repeats).

It localises to the cytoplasm. The protein resides in the cytoskeleton. The protein is WD repeat-containing protein 47 (WDR47) of Homo sapiens (Human).